The primary structure comprises 382 residues: Non-structural maintenance of chromosomes element 4 homolog A (382 aa).

Over residues 1 to 21 the composition is skewed to basic and acidic residues; sequence MSGDSSGRRPEGRGRGRDPHR. A disordered region spans residues 1-80; it reads MSGDSSGRRP…ASLEEETDPS (80 aa). Residues 31-41 show a composition bias toward low complexity; it reads RSPLSPGSRRG. Residues 42–55 show a composition bias toward basic and acidic residues; it reads AAPERREAPERPGL. Over residues 56-78 the composition is skewed to acidic residues; that stretch reads EDTEPSDSGDEMIDPASLEEETD. Position 342 is a phosphothreonine (threonine 342). Position 374 is a phosphoserine (serine 374).

Belongs to the NSE4 family. As to quaternary structure, component of the SMC5-SMC6 complex which consists at least of SMC5, SMC6, NSMCE2, NSMCE1, NSMCE4A or EID3 and NSMCE3. NSMCE1, NSMCE4A or EID3 and NSMCE3 probably form a subcomplex that bridges the head domains of the SMC5:SMC6 heterodimer. Interacts with NSMCE3.

Its subcellular location is the nucleus. It localises to the chromosome. The protein resides in the telomere. In terms of biological role, component of the SMC5-SMC6 complex, a complex involved in repair of DNA double-strand breaks by homologous recombination. The complex may promote sister chromatid homologous recombination by recruiting the SMC1-SMC3 cohesin complex to double-strand breaks. The complex is required for telomere maintenance via recombination and mediates sumoylation of shelterin complex (telosome) components. This Bos taurus (Bovine) protein is Non-structural maintenance of chromosomes element 4 homolog A (NSMCE4A).